The chain runs to 423 residues: Serine--tRNA ligase (423 aa).

230-232 (TAE) is an L-serine binding site. 261–263 (RAE) provides a ligand contact to ATP. Residue glutamate 284 participates in L-serine binding. 348 to 351 (EISS) contributes to the ATP binding site. Serine 384 lines the L-serine pocket.

It belongs to the class-II aminoacyl-tRNA synthetase family. Type-1 seryl-tRNA synthetase subfamily. In terms of assembly, homodimer. The tRNA molecule binds across the dimer.

The protein localises to the cytoplasm. The enzyme catalyses tRNA(Ser) + L-serine + ATP = L-seryl-tRNA(Ser) + AMP + diphosphate + H(+). It carries out the reaction tRNA(Sec) + L-serine + ATP = L-seryl-tRNA(Sec) + AMP + diphosphate + H(+). It participates in aminoacyl-tRNA biosynthesis; selenocysteinyl-tRNA(Sec) biosynthesis; L-seryl-tRNA(Sec) from L-serine and tRNA(Sec): step 1/1. Catalyzes the attachment of serine to tRNA(Ser). Is also able to aminoacylate tRNA(Sec) with serine, to form the misacylated tRNA L-seryl-tRNA(Sec), which will be further converted into selenocysteinyl-tRNA(Sec). The sequence is that of Serine--tRNA ligase from Acetivibrio thermocellus (strain ATCC 27405 / DSM 1237 / JCM 9322 / NBRC 103400 / NCIMB 10682 / NRRL B-4536 / VPI 7372) (Clostridium thermocellum).